We begin with the raw amino-acid sequence, 245 residues long: Octanoyltransferase (245 aa).

A BPL/LPL catalytic domain is found at 54–242 (QNAHEQVWLL…SFEQIFGPII (189 aa)). Residues 93–100 (RGGEFTYH), 173–175 (AIG), and 186–188 (GVS) contribute to the substrate site. C204 functions as the Acyl-thioester intermediate in the catalytic mechanism.

It belongs to the LipB family.

The protein resides in the cytoplasm. The catalysed reaction is octanoyl-[ACP] + L-lysyl-[protein] = N(6)-octanoyl-L-lysyl-[protein] + holo-[ACP] + H(+). The protein operates within protein modification; protein lipoylation via endogenous pathway; protein N(6)-(lipoyl)lysine from octanoyl-[acyl-carrier-protein]: step 1/2. Catalyzes the transfer of endogenously produced octanoic acid from octanoyl-acyl-carrier-protein onto the lipoyl domains of lipoate-dependent enzymes. Lipoyl-ACP can also act as a substrate although octanoyl-ACP is likely to be the physiological substrate. The protein is Octanoyltransferase of Bartonella henselae (strain ATCC 49882 / DSM 28221 / CCUG 30454 / Houston 1) (Rochalimaea henselae).